Here is a 436-residue protein sequence, read N- to C-terminus: UPF0229 protein Meso_0256 (436 aa).

The tract at residues 53–110 is disordered; it reads PMPARGTSEPTFRPDRSSGERGYILPGNKEFAPGDRLPKPGASGGEGGTGAGRGGSDD. Gly residues predominate over residues 94 to 106; the sequence is ASGGEGGTGAGRG.

The protein belongs to the UPF0229 family.

The chain is UPF0229 protein Meso_0256 from Chelativorans sp. (strain BNC1).